We begin with the raw amino-acid sequence, 351 residues long: Molybdate-binding protein MolA (351 aa).

A signal peptide spans 1-21; sequence MKLKSLLIACLLSSLSFSALA. The Fe/B12 periplasmic-binding domain occupies 41 to 322; it reads RAVVLQHQTL…WLAKALYPQR (282 aa). Molybdate is bound by residues 47 to 48, tyrosine 217, arginine 264, and 300 to 301; these read HQ and GY.

Belongs to the bacterial solute-binding protein 8 family. The complex is composed of two ATP-binding proteins (MolC), two transmembrane proteins (MolB) and a solute-binding protein (MolA).

It is found in the periplasm. The MolBCA complex shows a decrease in affinity in the presence of increasing concentrations of substrate and nucleotide. Its function is as follows. Part of the ABC transporter complex MolBCA involved in molybdate import. Functions as a low-affinity molybdate transporter. Binds to both molybdate and tungstate, but not to sulfate or phosphate. The polypeptide is Molybdate-binding protein MolA (Haemophilus influenzae (strain ATCC 51907 / DSM 11121 / KW20 / Rd)).